The primary structure comprises 371 residues: DNA primase large subunit PriL (371 aa).

The [4Fe-4S] cluster site is built by Cys-230, Cys-301, Cys-310, and Cys-317. The interval 337–371 (EREKEEGKEKGNEEKKEKREEHEKKNEKGNEIKEK) is disordered.

The protein belongs to the eukaryotic-type primase large subunit family. In terms of assembly, heterodimer of a small subunit (PriS) and a large subunit (PriL). Requires [4Fe-4S] cluster as cofactor.

Regulatory subunit of DNA primase, an RNA polymerase that catalyzes the synthesis of short RNA molecules used as primers for DNA polymerase during DNA replication. Stabilizes and modulates the activity of the small subunit, increasing the rate of DNA synthesis, and conferring RNA synthesis capability. The DNA polymerase activity may enable DNA primase to also catalyze primer extension after primer synthesis. May also play a role in DNA repair. In Methanosarcina acetivorans (strain ATCC 35395 / DSM 2834 / JCM 12185 / C2A), this protein is DNA primase large subunit PriL.